A 614-amino-acid polypeptide reads, in one-letter code: Glutamyl-tRNA(Gln) amidotransferase subunit E (614 aa).

Belongs to the GatB/GatE family. GatE subfamily. Heterodimer of GatD and GatE.

It catalyses the reaction L-glutamyl-tRNA(Gln) + L-glutamine + ATP + H2O = L-glutaminyl-tRNA(Gln) + L-glutamate + ADP + phosphate + H(+). Its function is as follows. Allows the formation of correctly charged Gln-tRNA(Gln) through the transamidation of misacylated Glu-tRNA(Gln) in organisms which lack glutaminyl-tRNA synthetase. The reaction takes place in the presence of glutamine and ATP through an activated gamma-phospho-Glu-tRNA(Gln). The GatDE system is specific for glutamate and does not act on aspartate. In Methanospirillum hungatei JF-1 (strain ATCC 27890 / DSM 864 / NBRC 100397 / JF-1), this protein is Glutamyl-tRNA(Gln) amidotransferase subunit E.